The following is a 183-amino-acid chain: TATA-box-binding protein (183 aa).

2 consecutive repeat copies span residues 8–84 and 99–175.

It belongs to the TBP family.

Its function is as follows. General factor that plays a role in the activation of archaeal genes transcribed by RNA polymerase. Binds specifically to the TATA box promoter element which lies close to the position of transcription initiation. This chain is TATA-box-binding protein, found in Methanosphaera stadtmanae (strain ATCC 43021 / DSM 3091 / JCM 11832 / MCB-3).